The chain runs to 146 residues: uncharacterized protein (146 aa).

The first 17 residues, Met1–Ala17, serve as a signal peptide directing secretion. Disordered stretches follow at residues Asn27–Leu54 and Glu70–Pro146. The segment covering Gln32 to Leu54 has biased composition (low complexity). Over residues Ser77–His118 the composition is skewed to polar residues.

This is an uncharacterized protein from Escherichia coli (strain K12).